Consider the following 282-residue polypeptide: Heterogeneous nuclear ribonucleoprotein C (282 aa).

Residues 17-88 (SRVFIGNLNT…QVLDINLAAE (72 aa)) enclose the RRM domain. 2 disordered regions span residues 131–177 (APPP…RLKG) and 208–282 (QSKQ…EEDS). A Nuclear localization signal motif is present at residues 141 to 147 (PSKRQRV). Low complexity predominate over residues 161–172 (SKSGQRGGSSKS). The stretch at 177–217 (GDDLQAIKKELSQIKQRVDSLLENLERIERDQSKQDTKLDD) forms a coiled coil. Basic and acidic residues-rich tracts occupy residues 208–217 (QSKQDTKLDD) and 224–235 (LKKEETGVKLIE). 2 stretches are compositionally biased toward acidic residues: residues 236–257 (ETGDSAEEGDLLDDDEQGEDTL) and 265–282 (KETEEGEDEGDSANEEDS).

It belongs to the RRM HNRPC family. RALY subfamily. As to quaternary structure, tetramer.

Its subcellular location is the nucleus. Binds pre-mRNA and nucleates the assembly of 40S hnRNP particles. Interacts with poly-U tracts in the 3'-UTR or 5'-UTR of mRNA and modulates the stability and the level of translation of bound mRNA molecules. Single HNRNPC tetramers bind 230-240 nucleotides. Trimers of HNRNPC tetramers bind 700 nucleotides. May play a role in the early steps of spliceosome assembly and pre-mRNA splicing. N6-methyladenosine (m6A) has been shown to alter the local structure in mRNAs and long non-coding RNAs (lncRNAs) via a mechanism named 'm(6)A-switch', facilitating binding of HNRNPC, leading to regulation of mRNA splicing. This is Heterogeneous nuclear ribonucleoprotein C (hnrnpc) from Xenopus laevis (African clawed frog).